The sequence spans 156 residues: Small ribosomal subunit protein uS7 (156 aa).

This sequence belongs to the universal ribosomal protein uS7 family. Part of the 30S ribosomal subunit. Contacts proteins S9 and S11.

One of the primary rRNA binding proteins, it binds directly to 16S rRNA where it nucleates assembly of the head domain of the 30S subunit. Is located at the subunit interface close to the decoding center, probably blocks exit of the E-site tRNA. The polypeptide is Small ribosomal subunit protein uS7 (Levilactobacillus brevis (strain ATCC 367 / BCRC 12310 / CIP 105137 / JCM 1170 / LMG 11437 / NCIMB 947 / NCTC 947) (Lactobacillus brevis)).